The primary structure comprises 68 residues: MNFNLRQAIMANIQGSNEQEVEATIVDAIQSGEEKMLPGLGVLFEVYWKNCNEQQKDQLCEQISQGLQ.

The protein belongs to the SspI family.

The protein localises to the spore core. In Halalkalibacterium halodurans (strain ATCC BAA-125 / DSM 18197 / FERM 7344 / JCM 9153 / C-125) (Bacillus halodurans), this protein is Small, acid-soluble spore protein I.